Here is an 807-residue protein sequence, read N- to C-terminus: Probable dimethyl sulfoxide reductase chain YnfF (807 aa).

The tat-type signal signal peptide spans Met1–Ala45. Residues Glu52–Asp113 enclose the 4Fe-4S Mo/W bis-MGD-type domain. Residues Cys59, Cys63, Cys67, and Cys99 each coordinate [4Fe-4S] cluster. Ser195 contributes to the Mo-bis(molybdopterin guanine dinucleotide) binding site.

This sequence belongs to the prokaryotic molybdopterin-containing oxidoreductase family. As to quaternary structure, the complex consists of three subunits: YnfF, the reductase; YnfG, an electron transfer protein, and YnfH, a membrane anchor protein. Requires [4Fe-4S] cluster as cofactor. Mo-bis(molybdopterin guanine dinucleotide) serves as cofactor. Exported by the Tat system. The position of the signal peptide cleavage has not been experimentally proven. Can also be exported by the Sec system.

The protein localises to the cell membrane. Functionally, terminal reductase during anaerobic growth on various sulfoxide and N-oxide compounds. This is Probable dimethyl sulfoxide reductase chain YnfF (ynfF) from Escherichia coli (strain K12).